The primary structure comprises 389 residues: Teichoic acid glycerol-phosphate transferase (389 aa).

Belongs to the CDP-glycerol glycerophosphotransferase family.

The protein resides in the cell membrane. The catalysed reaction is 4-O-[(2R)-glycerylphospho]-N-acetyl-beta-D-mannosaminyl-(1-&gt;4)-N-acetyl-alpha-D-glucosaminyl di-trans,octa-cis-undecaprenyl diphosphate + CDP-glycerol = 4-O-[di(2R)-glycerylphospho]-N-acetyl-beta-D-mannosaminyl-(1-&gt;4)-N-acetyl-alpha-D-glucosaminyl di-trans,octa-cis-undecaprenyl diphosphate + CMP + H(+). The protein operates within cell wall biogenesis; poly(ribitol phosphate) teichoic acid biosynthesis. Its function is as follows. Catalyzes the addition of a second glycerol phosphate unit from CDP-glycerol to the prenolpyrophosphate-linked disaccharide, to complete the linkage unit. The sequence is that of Teichoic acid glycerol-phosphate transferase (tarF) from Staphylococcus aureus (strain NCTC 8325 / PS 47).